A 386-amino-acid chain; its full sequence is Bifunctional enzyme IspD/IspF (386 aa).

The 2-C-methyl-D-erythritol 4-phosphate cytidylyltransferase stretch occupies residues 1 to 229 (MIRGERVIGI…RARALLEAPV (229 aa)). A 2-C-methyl-D-erythritol 2,4-cyclodiphosphate synthase region spans residues 230–386 (ATGVGYDTHR…AIALLVRAAG (157 aa)). 2 residues coordinate a divalent metal cation: Asp236 and His238. 4-CDP-2-C-methyl-D-erythritol 2-phosphate contacts are provided by residues 236-238 (DTH) and 261-262 (HS). Position 269 (His269) interacts with a divalent metal cation. Residues 283–285 (DLG), 288–292 (FPDTD), 359–362 (TTGE), Phe366, and Arg369 contribute to the 4-CDP-2-C-methyl-D-erythritol 2-phosphate site.

It in the N-terminal section; belongs to the IspD/TarI cytidylyltransferase family. IspD subfamily. This sequence in the C-terminal section; belongs to the IspF family. The cofactor is a divalent metal cation.

It catalyses the reaction 2-C-methyl-D-erythritol 4-phosphate + CTP + H(+) = 4-CDP-2-C-methyl-D-erythritol + diphosphate. The enzyme catalyses 4-CDP-2-C-methyl-D-erythritol 2-phosphate = 2-C-methyl-D-erythritol 2,4-cyclic diphosphate + CMP. It functions in the pathway isoprenoid biosynthesis; isopentenyl diphosphate biosynthesis via DXP pathway; isopentenyl diphosphate from 1-deoxy-D-xylulose 5-phosphate: step 2/6. The protein operates within isoprenoid biosynthesis; isopentenyl diphosphate biosynthesis via DXP pathway; isopentenyl diphosphate from 1-deoxy-D-xylulose 5-phosphate: step 4/6. In terms of biological role, bifunctional enzyme that catalyzes the formation of 4-diphosphocytidyl-2-C-methyl-D-erythritol from CTP and 2-C-methyl-D-erythritol 4-phosphate (MEP) (IspD), and catalyzes the conversion of 4-diphosphocytidyl-2-C-methyl-D-erythritol 2-phosphate (CDP-ME2P) to 2-C-methyl-D-erythritol 2,4-cyclodiphosphate (ME-CPP) with a corresponding release of cytidine 5-monophosphate (CMP) (IspF). In Anaeromyxobacter dehalogenans (strain 2CP-C), this protein is Bifunctional enzyme IspD/IspF.